The following is a 142-amino-acid chain: Putative pre-16S rRNA nuclease (142 aa).

It belongs to the YqgF nuclease family.

Its subcellular location is the cytoplasm. Its function is as follows. Could be a nuclease involved in processing of the 5'-end of pre-16S rRNA. The chain is Putative pre-16S rRNA nuclease from Lactobacillus delbrueckii subsp. bulgaricus (strain ATCC BAA-365 / Lb-18).